We begin with the raw amino-acid sequence, 1302 residues long: Multidrug resistance protein homolog 65 (1302 aa).

A disordered region spans residues 1-23 (MERDEVSTSSSEGKSQEEAPMAE). Over 1 to 48 (MERDEVSTSSSEGKSQEEAPMAEGLEPTEPIAFLKLFRFSTYGEIGWL) the chain is Cytoplasmic. One can recognise an ABC transmembrane type-1 1 domain in the interval 48-369 (LFFGFIMCCI…TAPFLESFAT (322 aa)). Residues 49–69 (FFGFIMCCIKALTLPAVVIIY) form a helical membrane-spanning segment. Over 70-118 (SEFTSMLVDRAMQFGTSSNVHALPLFGGGKTLTNASREENNEALYDDSI) the chain is Extracellular. N-linked (GlcNAc...) asparagine glycosylation occurs at Asn103. Residues 119 to 147 (SYGILLTIASVVMFISGIFSVDVFNMVAL) form a helical membrane-spanning segment. Residues 148 to 194 (RQVTRMRIKLFSSVIRQDIGWHDLASKQNFTQSMVDDVEKIRDGISE) are Cytoplasmic-facing. A helical membrane pass occupies residues 195 to 215 (KVGHFVYLVVGFIITVAISFS). Residues 216 to 223 (YGWKLTLA) lie on the Extracellular side of the membrane. Residues 224–242 (VSSYIPLVILLNYYVAKFQ) form a helical membrane-spanning segment. At 243-302 (GKLTAREQESYAGAGNLAEEILSSIRTVVSFGGEKSEVQRYENFLVPARKASQWKGAFSG) the chain is on the cytoplasmic side. The helical transmembrane segment at 303 to 323 (LSDAVLKSMLYLSCAGAFWYG) threads the bilayer. Residues 324–341 (VNLIIDDRNVENKEYTPA) are Extracellular-facing. A helical membrane pass occupies residues 342 to 362 (ILMIAFFGIIVGADNIARTAP). Over 363 to 731 (FLESFATARG…LQLAKQEWCY (369 aa)) the chain is Cytoplasmic. Residues 405-641 (VEFQDVFFRY…EGAYYNMVRA (237 aa)) enclose the ABC transporter 1 domain. Position 440–447 (440–447 (GSSGCGKS)) interacts with ATP. A helical membrane pass occupies residues 732 to 753 (LILGTISAVAVGFLYPAFAVIF). Positions 732–1020 (LILGTISAVA…SLAFTPAFSA (289 aa)) constitute an ABC transmembrane type-1 2 domain. Residues 754–776 (GEFYAALAEKDPEDALRRTAVLS) lie on the Extracellular side of the membrane. The chain crosses the membrane as a helical span at residues 777-798 (WACLGLAFLTGLVCFLQTYLFN). The Cytoplasmic segment spans residues 799–852 (YAGIWLTTRMRAMTFNAMVNQEVGWFDDENNSVGALSARLSGEAVDIQGAIGYP). The helical transmembrane segment at 853-873 (LSGMIQALSNFISSVSVAMYY) threads the bilayer. A topological domain (extracellular) is located at residue Asn874. Residues 875-894 (WKLALLCLANCPIIVGSVIL) traverse the membrane as a helical segment. Topologically, residues 895 to 956 (EAKMMSNAVV…VEVLIRQKLR (62 aa)) are cytoplasmic. Residues 957-977 (WRGVLNSTMQASAFFAYAVAL) traverse the membrane as a helical segment. The Extracellular portion of the chain corresponds to 978 to 993 (CYGGVLVSEGQLPFQD). Residues 994 to 1014 (IIKVSETLLYGSMMLAQSLAF) traverse the membrane as a helical segment. The Cytoplasmic portion of the chain corresponds to 1015-1302 (TPAFSAALIA…AKLHKTQKDH (288 aa)). Residues 1059 to 1298 (VRYRGIQFRY…GGIYAKLHKT (240 aa)) enclose the ABC transporter 2 domain. Residue 1094 to 1101 (GHSGCGKS) participates in ATP binding.

This sequence belongs to the ABC transporter superfamily. ABCB family. Multidrug resistance exporter (TC 3.A.1.201) subfamily.

It is found in the membrane. It catalyses the reaction ATP + H2O + xenobioticSide 1 = ADP + phosphate + xenobioticSide 2.. This is Multidrug resistance protein homolog 65 (Mdr65) from Drosophila melanogaster (Fruit fly).